The chain runs to 539 residues: Phospho-2-dehydro-3-deoxyheptonate aldolase 2, chloroplastic (539 aa).

Disordered stretches follow at residues 1 to 23 (MALA…SAPQ) and 41 to 70 (VHAA…APEK). The transit peptide at 1 to 54 (MALATNSAAVSGGAAAAASSAPQPRLAATFLPMRRRTVSAVHAADPAKSNGPVQ) directs the protein to the chloroplast. The span at 7–21 (SAAVSGGAAAAASSA) shows a compositional bias: low complexity.

Belongs to the class-II DAHP synthase family.

The protein resides in the plastid. Its subcellular location is the chloroplast. It catalyses the reaction D-erythrose 4-phosphate + phosphoenolpyruvate + H2O = 7-phospho-2-dehydro-3-deoxy-D-arabino-heptonate + phosphate. The protein operates within metabolic intermediate biosynthesis; chorismate biosynthesis; chorismate from D-erythrose 4-phosphate and phosphoenolpyruvate: step 1/7. In Oryza sativa subsp. japonica (Rice), this protein is Phospho-2-dehydro-3-deoxyheptonate aldolase 2, chloroplastic (DAHPS2).